The sequence spans 332 residues: MTAPPIRHVPVLGREAVAMLAPRAGGVYVDATFGAGGYSRAILATAETRVIGIDRDPTAIAGGSGLVEESGGRLILVEDRFSHLAAVCAAQDAAAVDGVVMDVGVSSMQLDEAGRGFSFRLDGPLDMRMSGHGPTAAEVVARASETDLADIIYIFGEERRSRAVARAIVGARRHGPIATTRALADIVSKVVRAKPHEIHPATRTFQALRIFVNEELDELIAALAAAERVLKPGGRLAVVSFHSLEDRIVKNFLAWRGKTGGGSRHRPEIERAPPSFAILTKRPLTPGDDEVQANPRARSARLRAAERTDAAAIDDGAELPAWPSLANVMRGG.

S-adenosyl-L-methionine contacts are provided by residues 36-38, aspartate 54, phenylalanine 81, aspartate 102, and glutamine 109; that span reads GGY.

The protein belongs to the methyltransferase superfamily. RsmH family.

The protein resides in the cytoplasm. The catalysed reaction is cytidine(1402) in 16S rRNA + S-adenosyl-L-methionine = N(4)-methylcytidine(1402) in 16S rRNA + S-adenosyl-L-homocysteine + H(+). In terms of biological role, specifically methylates the N4 position of cytidine in position 1402 (C1402) of 16S rRNA. The sequence is that of Ribosomal RNA small subunit methyltransferase H from Nitrobacter winogradskyi (strain ATCC 25391 / DSM 10237 / CIP 104748 / NCIMB 11846 / Nb-255).